The sequence spans 124 residues: Small ribosomal subunit protein uS13 (124 aa).

The segment at 94–124 (RGLPVRGQRTKTNARTRKGPKRTIAGKKKAR) is disordered.

It belongs to the universal ribosomal protein uS13 family. In terms of assembly, part of the 30S ribosomal subunit. Forms a loose heterodimer with protein S19. Forms two bridges to the 50S subunit in the 70S ribosome.

Functionally, located at the top of the head of the 30S subunit, it contacts several helices of the 16S rRNA. In the 70S ribosome it contacts the 23S rRNA (bridge B1a) and protein L5 of the 50S subunit (bridge B1b), connecting the 2 subunits; these bridges are implicated in subunit movement. Contacts the tRNAs in the A and P-sites. In Mycolicibacterium vanbaalenii (strain DSM 7251 / JCM 13017 / BCRC 16820 / KCTC 9966 / NRRL B-24157 / PYR-1) (Mycobacterium vanbaalenii), this protein is Small ribosomal subunit protein uS13.